We begin with the raw amino-acid sequence, 192 residues long: Crossover junction endodeoxyribonuclease RuvC (192 aa).

Residues D7, E67, and D140 contribute to the active site. D7, E67, and D140 together coordinate Mg(2+). The tract at residues 158 to 192 (RQSGVPPRTNSRRKSGTGGSWEQFVRQSPNVVVRS) is disordered. Over residues 182-192 (VRQSPNVVVRS) the composition is skewed to polar residues.

The protein belongs to the RuvC family. Homodimer which binds Holliday junction (HJ) DNA. The HJ becomes 2-fold symmetrical on binding to RuvC with unstacked arms; it has a different conformation from HJ DNA in complex with RuvA. In the full resolvosome a probable DNA-RuvA(4)-RuvB(12)-RuvC(2) complex forms which resolves the HJ. It depends on Mg(2+) as a cofactor.

The protein localises to the cytoplasm. It carries out the reaction Endonucleolytic cleavage at a junction such as a reciprocal single-stranded crossover between two homologous DNA duplexes (Holliday junction).. Functionally, the RuvA-RuvB-RuvC complex processes Holliday junction (HJ) DNA during genetic recombination and DNA repair. Endonuclease that resolves HJ intermediates. Cleaves cruciform DNA by making single-stranded nicks across the HJ at symmetrical positions within the homologous arms, yielding a 5'-phosphate and a 3'-hydroxyl group; requires a central core of homology in the junction. The consensus cleavage sequence is 5'-(A/T)TT(C/G)-3'. Cleavage occurs on the 3'-side of the TT dinucleotide at the point of strand exchange. HJ branch migration catalyzed by RuvA-RuvB allows RuvC to scan DNA until it finds its consensus sequence, where it cleaves and resolves the cruciform DNA. The sequence is that of Crossover junction endodeoxyribonuclease RuvC from Chlorobium chlorochromatii (strain CaD3).